The sequence spans 464 residues: Opioid growth factor receptor-like protein 1 (464 aa).

Disordered regions lie at residues 1–91 (MGNL…AKPK) and 309–464 (ENFI…TSSG). Residues 43 to 59 (QQHDEPEQPKQPPERAG) are compositionally biased toward basic and acidic residues. Low complexity predominate over residues 74-86 (AAGAEQGGESTEG). Positions 316–325 (PKKELPERSK) are enriched in basic and acidic residues. Over residues 327–342 (QKTPTLPASGSNGQTS) the composition is skewed to polar residues. Composition is skewed to basic and acidic residues over residues 363–382 (SVEE…DKPS), 390–400 (PKPRNTEKDSA), and 425–439 (SEKD…KDSE). A compositionally biased stretch (polar residues) spans 452-464 (AQQNATNPQTSSG).

This sequence belongs to the opioid growth factor receptor family.

The protein is Opioid growth factor receptor-like protein 1 (Ogfrl1) of Mus musculus (Mouse).